Reading from the N-terminus, the 248-residue chain is Malonyl-[acyl-carrier protein] O-methyltransferase 2 (248 aa).

This sequence belongs to the methyltransferase superfamily.

The catalysed reaction is malonyl-[ACP] + S-adenosyl-L-methionine = malonyl-[ACP] methyl ester + S-adenosyl-L-homocysteine. It functions in the pathway cofactor biosynthesis; biotin biosynthesis. Converts the free carboxyl group of a malonyl-thioester to its methyl ester by transfer of a methyl group from S-adenosyl-L-methionine (SAM). It allows to synthesize pimeloyl-ACP via the fatty acid synthetic pathway. The protein is Malonyl-[acyl-carrier protein] O-methyltransferase 2 of Coxiella burnetii (strain RSA 493 / Nine Mile phase I).